The primary structure comprises 237 residues: Methylthioribulose-1-phosphate dehydratase (237 aa).

Cysteine 98 contacts substrate. Zn(2+)-binding residues include histidine 116 and histidine 118. Glutamate 140 serves as the catalytic Proton donor/acceptor. Histidine 196 lines the Zn(2+) pocket.

It belongs to the aldolase class II family. MtnB subfamily. Zn(2+) is required as a cofactor.

Its subcellular location is the cytoplasm. The enzyme catalyses 5-(methylsulfanyl)-D-ribulose 1-phosphate = 5-methylsulfanyl-2,3-dioxopentyl phosphate + H2O. It participates in amino-acid biosynthesis; L-methionine biosynthesis via salvage pathway; L-methionine from S-methyl-5-thio-alpha-D-ribose 1-phosphate: step 2/6. Functionally, catalyzes the dehydration of methylthioribulose-1-phosphate (MTRu-1-P) into 2,3-diketo-5-methylthiopentyl-1-phosphate (DK-MTP-1-P). This is Methylthioribulose-1-phosphate dehydratase from Laccaria bicolor (strain S238N-H82 / ATCC MYA-4686) (Bicoloured deceiver).